Reading from the N-terminus, the 331-residue chain is Phosphate acyltransferase (331 aa).

The protein belongs to the PlsX family. Homodimer. Probably interacts with PlsY.

It localises to the cytoplasm. The enzyme catalyses a fatty acyl-[ACP] + phosphate = an acyl phosphate + holo-[ACP]. It functions in the pathway lipid metabolism; phospholipid metabolism. Functionally, catalyzes the reversible formation of acyl-phosphate (acyl-PO(4)) from acyl-[acyl-carrier-protein] (acyl-ACP). This enzyme utilizes acyl-ACP as fatty acyl donor, but not acyl-CoA. The polypeptide is Phosphate acyltransferase (Mesoplasma florum (strain ATCC 33453 / NBRC 100688 / NCTC 11704 / L1) (Acholeplasma florum)).